We begin with the raw amino-acid sequence, 100 residues long: Small ribosomal subunit protein uS14c (100 aa).

The protein belongs to the universal ribosomal protein uS14 family. In terms of assembly, part of the 30S ribosomal subunit.

It is found in the plastid. The protein resides in the chloroplast. Its function is as follows. Binds 16S rRNA, required for the assembly of 30S particles. The chain is Small ribosomal subunit protein uS14c from Phalaenopsis aphrodite subsp. formosana (Moth orchid).